A 691-amino-acid polypeptide reads, in one-letter code: Pentatricopeptide repeat-containing protein At5g27110 (691 aa).

PPR repeat units lie at residues 38 to 68 (DVVLCKSLINVYFTCKDHCSARHVFENFDIR), 70 to 104 (DVYIWNSLMSGYSKNSMFHDTLEVFKRLLNCSICV), 106 to 140 (DSFTFPNVIKAYGALGREFLGRMIHTLVVKSGYVC), 141 to 171 (DVVVASSLVGMYAKFNLFENSLQVFDEMPER), 172 to 206 (DVASWNTVISCFYQSGEAEKALELFGRMESSGFEP), 207 to 241 (NSVSLTVAISACSRLLWLERGKEIHRKCVKKGFEL), 242 to 272 (DEYVNSALVDMYGKCDCLEVAREVFQKMPRK), 273 to 307 (SLVAWNSMIKGYVAKGDSKSCVEILNRMIIEGTRP), 308 to 342 (SQTTLTSILMACSRSRNLLHGKFIHGYVIRSVVNA), 343 to 373 (DIYVNCSLIDLYFKCGEANLAETVFSKTQKD), 374 to 408 (VAESWNVMISSYISVGNWFKAVEVYDQMVSVGVKP), 409 to 443 (DVVTFTSVLPACSQLAALEKGKQIHLSISESRLET), 444 to 474 (DELLLSALLDMYSKCGNEKEAFRIFNSIPKK), 475 to 509 (DVVSWTVMISAYGSHGQPREALYQFDEMQKFGLKP), 510 to 540 (DGVTLLAVLSACGHAGLIDEGLKFFSQMRSK), and 546 to 576 (IIEHYSCMIDILGRAGRLLEAYEIIQQTPET). Positions 582–657 (LLSTLFSACC…KPGCSWIEMS (76 aa)) are type E motif. Residues 658 to 688 (DKVCHFFAEDRSHLRAENVYECLALLSGHME) form a type E(+) motif region.

The protein belongs to the PPR family. PCMP-E subfamily.

This Arabidopsis thaliana (Mouse-ear cress) protein is Pentatricopeptide repeat-containing protein At5g27110 (PCMP-E14).